The following is a 201-amino-acid chain: Phosphatidylglycerophosphatase and protein-tyrosine phosphatase 1 (201 aa).

A mitochondrion-targeting transit peptide spans 1–27 (MAATALLEAGLARVLFYPTLLYTLFRG). A Tyrosine-protein phosphatase domain is found at 37–188 (WYHRIDPTVL…LKEFHKQITA (152 aa)). The active-site Phosphocysteine intermediate is the cysteine 132.

The protein belongs to the protein-tyrosine phosphatase family. Non-receptor class dual specificity subfamily. Interacts with STYXL1; the interaction inhibits PTPMT1 catalytic activity.

It localises to the mitochondrion inner membrane. The catalysed reaction is a 1,2-diacyl-sn-glycero-3-phospho-(1'-sn-glycero-3'-phosphate) + H2O = a 1,2-diacyl-sn-glycero-3-phospho-(1'-sn-glycerol) + phosphate. The enzyme catalyses O-phospho-L-tyrosyl-[protein] + H2O = L-tyrosyl-[protein] + phosphate. It carries out the reaction O-phospho-L-seryl-[protein] + H2O = L-seryl-[protein] + phosphate. It catalyses the reaction O-phospho-L-threonyl-[protein] + H2O = L-threonyl-[protein] + phosphate. The catalysed reaction is 1,2-di-(9Z-octadecenoyl)-sn-glycero-3-phospho-(1'-sn-glycerol-3'-phosphate) + H2O = 1,2-di-(9Z-octadecenoyl)-sn-glycero-3-phospho-(1'-sn-glycerol) + phosphate. The enzyme catalyses 1,2-dioctanoyl-sn-glycero-3-phospho-(1D-myo-inositol-5-phosphate) + H2O = 1,2-dioctanoyl-sn-glycero-3-phospho-(1D-myo-inositol) + phosphate. It carries out the reaction a 1-acyl-2-hexanoyl-sn-glycero-3-phospho-(1D-myo-inositol-5-phosphate) + H2O = a 1-acyl-2-hexanoyl-sn-glycero-3-phospho-(1D-myo-inositol) + phosphate. It catalyses the reaction 1,2-dibutyryl-sn-glycero-3-phospho-(1D-myo-inositol-5-phosphate) + H2O = 1,2-dibutyryl-sn-glycero-3-phospho-(1D-myo-inositol) + phosphate. Its pathway is phospholipid metabolism; phosphatidylglycerol biosynthesis; phosphatidylglycerol from CDP-diacylglycerol: step 2/2. In terms of biological role, lipid phosphatase which dephosphorylates phosphatidylglycerophosphate (PGP) to phosphatidylglycerol (PG). PGP is an essential intermediate in the biosynthetic pathway of cardiolipin, a mitochondrial-specific phospholipid regulating the membrane integrity and activities of the organelle. Has also been shown to display phosphatase activity toward phosphoprotein substrates, specifically mediates dephosphorylation of mitochondrial proteins, thereby playing an essential role in ATP production. Has probably a preference for proteins phosphorylated on Ser and/or Thr residues compared to proteins phosphorylated on Tyr residues. Probably involved in regulation of insulin secretion in pancreatic beta cells. May prevent intrinsic apoptosis, probably by regulating mitochondrial membrane integrity. The sequence is that of Phosphatidylglycerophosphatase and protein-tyrosine phosphatase 1 from Homo sapiens (Human).